A 715-amino-acid polypeptide reads, in one-letter code: Tegument protein UL46 (715 aa).

Disordered regions lie at residues 432–513 (WSAG…CAAQ), 585–605 (DDAR…APYE), and 659–680 (GSAL…PSPV). Residues 444–455 (GPGGHRAGGGTV) show a composition bias toward gly residues. Composition is skewed to low complexity over residues 456–467 (GKRFSGPARQRA) and 475–488 (PTLD…VPEA). Positions 664–677 (SPPPRPPPPPPLSP) are enriched in pro residues.

Belongs to the herpesviridae HHV-1 VP11/12 protein family. In terms of assembly, interacts with VP16. Interacts with host LCK, PIK3R1, SHC1 AND GRB2; these interactions promote the activation of the PI3K/AKT pathway. Interacts with host YWHAB. Interacts with ICP0; this interaction targets UL46 for degradation by the proteasome. Post-translationally, phosphorylated by host LCK. The phosphorylation seems to be lymphocyte-specific.

It localises to the virion tegument. Its subcellular location is the host cell membrane. In terms of biological role, plays a role in the activation of the host PI3K/AKT pathway to promote cell survival. Interacts with and activates host LCK and thereby recruits downstream partners SHC1, GRB2 and PI3KR1 in order to activate the PI3K pathway by phosphorylating host AKT on its activating residues. This mechanism is inhibited by the viral protein US3 that instead promotes incorporation of UL46 into virions. The chain is Tegument protein UL46 from Human herpesvirus 1 (strain F) (HHV-1).